The primary structure comprises 247 residues: Ribosomal RNA large subunit methyltransferase E (247 aa).

Residues Met-1–Ala-21 form a disordered region. Residues Ser-8–Pro-17 show a composition bias toward basic and acidic residues. Positions 80, 82, 108, 124, and 153 each coordinate S-adenosyl-L-methionine. Lys-193 (proton acceptor) is an active-site residue.

The protein belongs to the class I-like SAM-binding methyltransferase superfamily. RNA methyltransferase RlmE family.

It is found in the cytoplasm. It catalyses the reaction uridine(2552) in 23S rRNA + S-adenosyl-L-methionine = 2'-O-methyluridine(2552) in 23S rRNA + S-adenosyl-L-homocysteine + H(+). Its function is as follows. Specifically methylates the uridine in position 2552 of 23S rRNA at the 2'-O position of the ribose in the fully assembled 50S ribosomal subunit. The protein is Ribosomal RNA large subunit methyltransferase E of Polaromonas sp. (strain JS666 / ATCC BAA-500).